The primary structure comprises 693 residues: DNA ligase (693 aa).

NAD(+) contacts are provided by residues 35–39, 84–85, and Glu-121; these read DAEYD and SI. Lys-123 functions as the N6-AMP-lysine intermediate in the catalytic mechanism. Positions 144, 180, 297, and 321 each coordinate NAD(+). Residues Cys-418, Cys-421, Cys-436, and Cys-442 each contribute to the Zn(2+) site. The BRCT domain occupies 601 to 690; that stretch reads PASGSVAGLT…EQSPINNKDG (90 aa).

It belongs to the NAD-dependent DNA ligase family. LigA subfamily. The cofactor is Mg(2+). Mn(2+) serves as cofactor.

It catalyses the reaction NAD(+) + (deoxyribonucleotide)n-3'-hydroxyl + 5'-phospho-(deoxyribonucleotide)m = (deoxyribonucleotide)n+m + AMP + beta-nicotinamide D-nucleotide.. In terms of biological role, DNA ligase that catalyzes the formation of phosphodiester linkages between 5'-phosphoryl and 3'-hydroxyl groups in double-stranded DNA using NAD as a coenzyme and as the energy source for the reaction. It is essential for DNA replication and repair of damaged DNA. The chain is DNA ligase from Azoarcus sp. (strain BH72).